The following is a 190-amino-acid chain: MEHESKTKMDGIEMEKGKKENGSRKGVEITMRVLALVLTMVAATVLGVAKQTEVVPIKLIPTLPPLNVATTAKASYLSAFVYNICANAIACGYTAISIMIVIISKGRRSKCLLMAVLIGDLMMVALLCSSTGAAGAIGLMGRHGNKHVMWKKVCGVFGKFCNQAAVSVAITLIASVVFMLLVVLDALKLP.

The tract at residues 1–21 is disordered; sequence MEHESKTKMDGIEMEKGKKEN. Topologically, residues 1 to 28 are cytoplasmic; that stretch reads MEHESKTKMDGIEMEKGKKENGSRKGVE. The helical transmembrane segment at 29–49 threads the bilayer; that stretch reads ITMRVLALVLTMVAATVLGVA. Residues 50–83 lie on the Extracellular side of the membrane; sequence KQTEVVPIKLIPTLPPLNVATTAKASYLSAFVYN. Residues 84–104 form a helical membrane-spanning segment; sequence ICANAIACGYTAISIMIVIIS. The Cytoplasmic portion of the chain corresponds to 105-111; that stretch reads KGRRSKC. The helical transmembrane segment at 112–132 threads the bilayer; it reads LLMAVLIGDLMMVALLCSSTG. Topologically, residues 133-163 are extracellular; sequence AAGAIGLMGRHGNKHVMWKKVCGVFGKFCNQ. A helical membrane pass occupies residues 164 to 184; it reads AAVSVAITLIASVVFMLLVVL. Topologically, residues 185–190 are cytoplasmic; sequence DALKLP.

It belongs to the Casparian strip membrane proteins (CASP) family. Homodimer and heterodimers.

The protein localises to the cell membrane. The sequence is that of CASP-like protein 1E1 from Arabidopsis lyrata subsp. lyrata (Lyre-leaved rock-cress).